A 106-amino-acid polypeptide reads, in one-letter code: Large ribosomal subunit protein uL24 (106 aa).

The disordered stretch occupies residues 1 to 20 (MNKRAKSKNREPLRKSPVKR). Positions 8 to 20 (KNREPLRKSPVKR) are enriched in basic and acidic residues.

It belongs to the universal ribosomal protein uL24 family. Part of the 50S ribosomal subunit.

One of two assembly initiator proteins, it binds directly to the 5'-end of the 23S rRNA, where it nucleates assembly of the 50S subunit. In terms of biological role, one of the proteins that surrounds the polypeptide exit tunnel on the outside of the subunit. The protein is Large ribosomal subunit protein uL24 of Methylacidiphilum infernorum (isolate V4) (Methylokorus infernorum (strain V4)).